We begin with the raw amino-acid sequence, 194 residues long: Peptidyl-tRNA hydrolase (194 aa).

Y17 is a tRNA binding site. Catalysis depends on H22, which acts as the Proton acceptor. TRNA-binding residues include F68, N70, and N116.

Belongs to the PTH family. Monomer.

The protein resides in the cytoplasm. It catalyses the reaction an N-acyl-L-alpha-aminoacyl-tRNA + H2O = an N-acyl-L-amino acid + a tRNA + H(+). Its function is as follows. Hydrolyzes ribosome-free peptidyl-tRNAs (with 1 or more amino acids incorporated), which drop off the ribosome during protein synthesis, or as a result of ribosome stalling. Catalyzes the release of premature peptidyl moieties from peptidyl-tRNA molecules trapped in stalled 50S ribosomal subunits, and thus maintains levels of free tRNAs and 50S ribosomes. The chain is Peptidyl-tRNA hydrolase from Histophilus somni (strain 129Pt) (Haemophilus somnus).